A 202-amino-acid polypeptide reads, in one-letter code: Cutinase (202 aa).

An N-terminal signal peptide occupies residues 1–20 (MKTSAQQLLSALLLPLSVLA). A disulfide bridge links C31 with C106. S117 (nucleophile) is an active-site residue. A disulfide bridge connects residues C165 and C172. D169 is a catalytic residue. Residue H182 is the Proton donor/acceptor of the active site.

The protein belongs to the cutinase family. Post-translationally, the 2 disulfide bonds play a critical role in holding the catalytic residues in juxta-position; reduction of the disulfide bridges results in the complete inactivation of the enzyme.

It is found in the secreted. The enzyme catalyses cutin + H2O = cutin monomers.. Its function is as follows. Catalyzes the hydrolysis of complex carboxylic polyesters found in the cell wall of plants. Degrades cutin, a macromolecule that forms the structure of the plant cuticle. Allows pathogenic fungi to penetrate through the cuticular barrier into the host plant during the initial stage of fungal infection. The protein is Cutinase of Botryotinia fuckeliana (Noble rot fungus).